A 958-amino-acid polypeptide reads, in one-letter code: MutS protein homolog 4 (958 aa).

2 disordered regions span residues 51–110 (QEAA…SFGN) and 124–161 (PVGTSSSSARDTTYPHTFRTPLSAGNPQRSGHKSWTPQ). Over residues 91 to 107 (SSSSSSSPAPASAPGSS) the composition is skewed to low complexity. Composition is skewed to polar residues over residues 124-138 (PVGTSSSSARDTTYP) and 146-161 (SAGNPQRSGHKSWTPQ). Residue 702–709 (GPNMSGKS) coordinates ATP.

Belongs to the DNA mismatch repair MutS family. In terms of assembly, heterooligomer of MSH4 and MSH5. In terms of tissue distribution, predominantly expressed in testis.

Its subcellular location is the chromosome. Functionally, involved in meiotic recombination. Required for reciprocal recombination and proper segregation of homologous chromosomes at meiosis. This Mus musculus (Mouse) protein is MutS protein homolog 4 (Msh4).